Reading from the N-terminus, the 700-residue chain is MGRRVPALRQLLVLAMLVLKQSQLHSPELSGSRCPEPCDCAPDGALRCPGPRAGLARLSLTYLPVKVIPSQAFRGLNEVVKIEISQSDSLERIEANAFDNLLNLSEILIQNTKNLLYIEPGAFTNLPRLKYLSICNTGIRTLPDVSKISSSEFNFILEICDNLYITTIPGNAFQGMNNESITLKLYGNGFEEVQSHAFNGTTLISLELKENIYLEKMHSGTFQGATGPSILDVSSTKLQALPSHGLESIQTLIATSSYSLKTLPSREKFTSLLVATLTYPSHCCAFRNLPKKEQNFSFSIFENFSKQCESTVREANNETLYSAIFEENELSGWDYDYDFCSPKTLQCTPEPDAFNPCEDIMGYAFLRVLIWLINILAIFGNLTVLFVLLTSRYKLTVPRFLMCNLSFADFCMGLYLLLIASVDSQTKGQYYNHAIDWQTGSGCSAAGFFTVFASELSVYTLTVITLERWHTITYAVQLDQKLRLRHAIPIMLGGWIFSTLMATLPLVGVSSYMKVSICLPMDVESTLSQVYILSILLLNAVAFVVICACYVRIYFAVQNPELTAPNKDTKIAKKMAILIFTDFTCMAPISFFAISAAFKVPLITVTNSKVLLVLFYPVNSCANPFLYAVFTKAFQRDFFLLLSRFGCCKHRAELYRRKEFSACTFNSKNGFPRSSKPSQAALKLSIVHCQQPTPPRVLIQ.

An N-terminal signal peptide occupies residues 1-26 (MGRRVPALRQLLVLAMLVLKQSQLHS). The Extracellular segment spans residues 27–362 (PELSGSRCPE…AFNPCEDIMG (336 aa)). The LRR 1 repeat unit spans residues 52-75 (RAGLARLSLTYLPVKVIPSQAFRG). An N-linked (GlcNAc...) asparagine glycan is attached at N103. LRR repeat units lie at residues 126–150 (LPRL…KISS), 176–200 (MNNE…AFNG), and 225–248 (ATGP…GLES). N178 and N199 each carry an N-linked (GlcNAc...) asparagine glycan. N295, N303, and N317 each carry an N-linked (GlcNAc...) asparagine glycan. Residue Y335 is modified to Sulfotyrosine. A helical membrane pass occupies residues 363 to 390 (YAFLRVLIWLINILAIFGNLTVLFVLLT). Residues 391–399 (SRYKLTVPR) lie on the Cytoplasmic side of the membrane. The helical transmembrane segment at 400–422 (FLMCNLSFADFCMGLYLLLIASV) threads the bilayer. The Extracellular segment spans residues 423-443 (DSQTKGQYYNHAIDWQTGSGC). A disulfide bridge links C443 with C518. The chain crosses the membrane as a helical span at residues 444–466 (SAAGFFTVFASELSVYTLTVITL). The Cytoplasmic portion of the chain corresponds to 467–486 (ERWHTITYAVQLDQKLRLRH). A helical transmembrane segment spans residues 487–509 (AIPIMLGGWIFSTLMATLPLVGV). Topologically, residues 510 to 529 (SSYMKVSICLPMDVESTLSQ) are extracellular. Residues 530–551 (VYILSILLLNAVAFVVICACYV) traverse the membrane as a helical segment. At 552 to 574 (RIYFAVQNPELTAPNKDTKIAKK) the chain is on the cytoplasmic side. The helical transmembrane segment at 575-598 (MAILIFTDFTCMAPISFFAISAAF) threads the bilayer. Residues 599-609 (KVPLITVTNSK) are Extracellular-facing. The helical transmembrane segment at 610–631 (VLLVLFYPVNSCANPFLYAVFT) threads the bilayer. Residues 632 to 700 (KAFQRDFFLL…QPTPPRVLIQ (69 aa)) are Cytoplasmic-facing. 2 S-palmitoyl cysteine lipidation sites follow: C647 and C648.

The protein belongs to the G-protein coupled receptor 1 family. FSH/LSH/TSH subfamily. In terms of processing, sulfated.

The protein resides in the cell membrane. In terms of biological role, receptor for lutropin-choriogonadotropic hormone. The activity of this receptor is mediated by G proteins which activate adenylate cyclase. This is Lutropin-choriogonadotropic hormone receptor (Lhcgr) from Mus musculus (Mouse).